A 474-amino-acid chain; its full sequence is Replication factor C large subunit (474 aa).

45–52 (GPPGCGKT) is an ATP binding site. Residues 415–468 (DKKTNNKKGKENKTKNTTKKIKEIKETPKKEEVKEPKKQIEKQKSEKKEPKKQM) are compositionally biased toward basic and acidic residues. The disordered stretch occupies residues 415–474 (DKKTNNKKGKENKTKNTTKKIKEIKETPKKEEVKEPKKQIEKQKSEKKEPKKQMTLESFF).

Belongs to the activator 1 small subunits family. RfcL subfamily. Heteromultimer composed of small subunits (RfcS) and large subunits (RfcL).

Its function is as follows. Part of the RFC clamp loader complex which loads the PCNA sliding clamp onto DNA. In Methanococcus aeolicus (strain ATCC BAA-1280 / DSM 17508 / OCM 812 / Nankai-3), this protein is Replication factor C large subunit.